The chain runs to 189 residues: GTPase NRas (189 aa).

GTP-binding positions include 10–18 (GAGGVGKSA) and 29–30 (VD). The Effector region signature appears at 32–40 (YDPTIEDSY). 57 to 61 (DTAGQ) contacts GTP. Residue S89 is modified to Phosphoserine. 116–119 (NKCD) contacts GTP. A hypervariable region region spans residues 166–185 (YRMKKLNSSDDGTQGCMGLP). Residue K170 forms a Glycyl lysine isopeptide (Lys-Gly) (interchain with G-Cter in ubiquitin) linkage. C181 carries S-palmitoyl cysteine lipidation. C186 carries the S-farnesyl cysteine lipid modification. A propeptide spans 187–189 (VVM) (removed in mature form).

This sequence belongs to the small GTPase superfamily. Ras family. Interacts (active GTP-bound form preferentially) with RGS14. Interacts (active GTP-bound form) with RASSF7. Interacts (active GTP-bound form) with both SHOC2 and PP1c (all isoforms) to form a tertiary complex; SHOC2 and PP1c preferably bind M-Ras/MRAS, but they also bind K-Ras/KRAS, N-Ras/NRAS and H-Ras/HRAS. In terms of processing, palmitoylated by the ZDHHC9-GOLGA7 complex. Depalmitoylated by ABHD17A, ABHD17B and ABHD17C. A continuous cycle of de- and re-palmitoylation regulates rapid exchange between plasma membrane and Golgi. Post-translationally, acetylation at Lys-104 prevents interaction with guanine nucleotide exchange factors (GEFs). Ubiquitinated by the BCR(LZTR1) E3 ubiquitin ligase complex at Lys-170 in a non-degradative manner, leading to inhibit Ras signaling by decreasing Ras association with membranes. In terms of processing, phosphorylation at Ser-89 enhances NRAS association with its downstream effectors.

It localises to the cell membrane. Its subcellular location is the golgi apparatus membrane. The enzyme catalyses GTP + H2O = GDP + phosphate + H(+). Alternates between an inactive form bound to GDP and an active form bound to GTP. Activated by a guanine nucleotide-exchange factor (GEF) and inactivated by a GTPase-activating protein (GAP). In terms of biological role, ras proteins bind GDP/GTP and possess intrinsic GTPase activity. In Pongo abelii (Sumatran orangutan), this protein is GTPase NRas (NRAS).